The sequence spans 352 residues: Glycerol-3-phosphate dehydrogenase 1-like protein (352 aa).

Residue 13–18 (GSGNWG) coordinates NAD(+). Substrate is bound at residue Lys-123. Ala-156 provides a ligand contact to NAD(+). The Proton acceptor role is filled by Lys-207. NAD(+)-binding residues include Arg-272, Lys-299, and Gln-301. 272–273 (RN) is a binding site for substrate.

The protein belongs to the NAD-dependent glycerol-3-phosphate dehydrogenase family.

It localises to the cytoplasm. The enzyme catalyses sn-glycerol 3-phosphate + NAD(+) = dihydroxyacetone phosphate + NADH + H(+). Plays a role in regulating cardiac sodium current. This Xenopus tropicalis (Western clawed frog) protein is Glycerol-3-phosphate dehydrogenase 1-like protein (gpd1l).